A 354-amino-acid polypeptide reads, in one-letter code: Rhodopsin (354 aa).

Residues 1–36 (MNGTEGPYFYVPMVNTTGIVRSPYEYPQYYLVSPAA) are Extracellular-facing. 2 N-linked (GlcNAc...) asparagine glycosylation sites follow: N2 and N15. A helical membrane pass occupies residues 37–61 (YACLGAYMFFLILVGFPVNFLTLYV). The Cytoplasmic portion of the chain corresponds to 62–73 (TIEHKKLRTPLN). Residues 74-96 (YILLNLAVADLFMVFGGFTTTIY) traverse the membrane as a helical segment. Residues 97 to 110 (TSMHGYFVLGRLGC) are Extracellular-facing. A disulfide bond links C110 and C187. The helical transmembrane segment at 111-133 (NLEGYFATLGGEIGLWSLVVLAV) threads the bilayer. Positions 134 to 136 (ERW) match the 'Ionic lock' involved in activated form stabilization motif. Residues 134 to 152 (ERWLVVCKPISNFRFTENH) lie on the Cytoplasmic side of the membrane. A helical transmembrane segment spans residues 153-173 (AIMGLVFTWIMANACAAPPLL). At 174-202 (GWSRYIPEGMQCSCGVDYYTRAEGFNNES) the chain is on the extracellular side. A helical membrane pass occupies residues 203 to 224 (FVIYMFICHFCIPLVVVFFCYG). Topologically, residues 225–252 (RLLCAVKEAAAAQQESETTQRAEREVTR) are cytoplasmic. A helical transmembrane segment spans residues 253–274 (MVVILVIGFLVCWTPYASVAWY). Residues 275-286 (IFSNQGSEFGPL) are Extracellular-facing. Residues 287 to 308 (FMTIPAFFAKSSSIYNPMIYIC) traverse the membrane as a helical segment. The residue at position 296 (K296) is an N6-(retinylidene)lysine. Residues 309-354 (MNKQFRHCMITTLCCGKNPFEEEEGASTTASKTEASSVSSSSVSPA) are Cytoplasmic-facing. S-palmitoyl cysteine attachment occurs at residues C322 and C323. The tract at residues 333 to 354 (GASTTASKTEASSVSSSSVSPA) is disordered. Positions 334-354 (ASTTASKTEASSVSSSSVSPA) are enriched in low complexity.

Belongs to the G-protein coupled receptor 1 family. Opsin subfamily. Post-translationally, phosphorylated on some or all of the serine and threonine residues present in the C-terminal region. Contains one covalently linked retinal chromophore.

The protein localises to the membrane. Its subcellular location is the cell projection. It localises to the cilium. It is found in the photoreceptor outer segment. Its function is as follows. Photoreceptor required for image-forming vision at low light intensity. While most salt water fish species use retinal as chromophore, most freshwater fish use 3-dehydroretinal, or a mixture of retinal and 3-dehydroretinal. Light-induced isomerization of 11-cis to all-trans retinal triggers a conformational change that activates signaling via G-proteins. Subsequent receptor phosphorylation mediates displacement of the bound G-protein alpha subunit by arrestin and terminates signaling. In Gambusia affinis (Western mosquitofish), this protein is Rhodopsin (rho).